The primary structure comprises 213 residues: MEQYKHDFIEFALSRNVLKFGEFTLKSGRKSPYFFNAGLFNTGRDLAKLGEFYAQAIQASGLNFDVLFGPAYKGIPIATTVAVALVNQFDVDKPCCFNRKEAKDHGEGGNLIGSPLKGRILLVDDVITAGTAIRESMEIINANQAELAGVLIALNRKEKGKGELSAIQEVERDYGCQVFSIIDFDDLIQFIEKSEQYAPYLASMRAYREQYGV.

Lysine 26 is a 5-phospho-alpha-D-ribose 1-diphosphate binding site. Phenylalanine 34–phenylalanine 35 is an orotate binding site. 5-phospho-alpha-D-ribose 1-diphosphate contacts are provided by residues tyrosine 72 to lysine 73, arginine 99, lysine 100, lysine 103, histidine 105, and aspartate 124 to alanine 132. Residues threonine 128 and arginine 156 each coordinate orotate.

This sequence belongs to the purine/pyrimidine phosphoribosyltransferase family. PyrE subfamily. As to quaternary structure, homodimer. Requires Mg(2+) as cofactor.

It carries out the reaction orotidine 5'-phosphate + diphosphate = orotate + 5-phospho-alpha-D-ribose 1-diphosphate. It functions in the pathway pyrimidine metabolism; UMP biosynthesis via de novo pathway; UMP from orotate: step 1/2. Its function is as follows. Catalyzes the transfer of a ribosyl phosphate group from 5-phosphoribose 1-diphosphate to orotate, leading to the formation of orotidine monophosphate (OMP). The polypeptide is Orotate phosphoribosyltransferase (Actinobacillus pleuropneumoniae serotype 5b (strain L20)).